We begin with the raw amino-acid sequence, 142 residues long: Cell division protein SepF (142 aa).

Residues E21–E31 are compositionally biased toward acidic residues. Residues E21 to N46 form a disordered region.

Belongs to the SepF family. In terms of assembly, homodimer. Interacts with FtsZ.

The protein localises to the cytoplasm. Its function is as follows. Cell division protein that is part of the divisome complex and is recruited early to the Z-ring. Probably stimulates Z-ring formation, perhaps through the cross-linking of FtsZ protofilaments. Its function overlaps with FtsA. The protein is Cell division protein SepF of Brevibacillus brevis (strain 47 / JCM 6285 / NBRC 100599).